Here is a 353-residue protein sequence, read N- to C-terminus: UPF0283 membrane protein YcjF (353 aa).

Basic and acidic residues predominate over residues 1–19 (MSEPLKPRIDFAEPLKEEP). Residues 1–35 (MSEPLKPRIDFAEPLKEEPTSAFKAQQTFSEAESR) form a disordered region. The next 3 membrane-spanning stretches (helical) occupy residues 70 to 90 (MVMGGLALFGASVVGQGVQWT), 100 to 120 (VALGGCAAGALIIGAGVGSVV), and 213 to 233 (ESTLMIAVSSLALVDMAFIAW).

The protein belongs to the UPF0283 family.

It localises to the cell inner membrane. This Salmonella enteritidis PT4 (strain P125109) protein is UPF0283 membrane protein YcjF.